A 712-amino-acid polypeptide reads, in one-letter code: Polyadenylation factor subunit 2 (712 aa).

The segment at 1 to 37 is disordered; sequence MTAPTVPADQHGHPLPGPADPAANDTWRPSRYREPLH. WD repeat units lie at residues 131 to 170, 173 to 213, 214 to 253, 256 to 295, 298 to 337, 340 to 380, and 387 to 426; these read KERSPTRVVRWTPDARRLLTGNDKGQFTLWNGASFNYESI, VHDD…HGFQ, GHREACHDVSWSPNDERFVTCGDDGLVKIWSYREAKEERS, GHGWDVRCVDWHPTKGLIVSGSKDMLVKFWDPRTGKDLST, SSKSTINTCRWSPDGHLVATAGQDSVIRLFDIRTFRELEV, GHEK…PSTP, and AHEDAVFSLSFHPLGHILCSGSKDFTARFWCRARPPGGQE. Disordered regions lie at residues 446-473 and 489-712; these read TKREWGTNAPPANAAGGGGGGGGDKQQV and KTGP…DGRR. Composition is skewed to gly residues over residues 460–469 and 494–504; these read AGGGGGGGGD and TTGGGPSGLPG. Low complexity predominate over residues 533 to 545; it reads QGQAQGGQFPRGR. Residues 565-592 are compositionally biased toward basic and acidic residues; it reads FADRDRNGGGDRGGMDRDRDSRGGRQDP. Pro residues-rich tracts occupy residues 603 to 612 and 619 to 671; these read GGPPPGPPPG and PPAP…PQGP. The segment covering 678–712 has biased composition (gly residues); the sequence is GGQGNYGASASGGYGQYGGGGGGGGGGGYGRDGRR.

It is found in the nucleus. Functionally, required for 3'-end cleavage and polyadenylation of pre-mRNAs. Also involved in chromosome segregation where it has a role in chromosome attachment to the mitotic spindle. This Cryptococcus neoformans var. neoformans serotype D (strain JEC21 / ATCC MYA-565) (Filobasidiella neoformans) protein is Polyadenylation factor subunit 2 (PFS2).